Reading from the N-terminus, the 118-residue chain is Large ribosomal subunit protein bL19 (118 aa).

This sequence belongs to the bacterial ribosomal protein bL19 family.

This protein is located at the 30S-50S ribosomal subunit interface and may play a role in the structure and function of the aminoacyl-tRNA binding site. The polypeptide is Large ribosomal subunit protein bL19 (Campylobacter lari (strain RM2100 / D67 / ATCC BAA-1060)).